A 159-amino-acid polypeptide reads, in one-letter code: Phosphoribosylaminoimidazole carboxylase (159 aa).

The substrate site is built by Ser-11, Asp-14, Ser-38, Lys-41, Gly-67, and Ser-69.

It catalyses the reaction 5-amino-1-(5-phospho-D-ribosyl)imidazole-4-carboxylate + H(+) = 5-amino-1-(5-phospho-beta-D-ribosyl)imidazole + CO2. The protein operates within purine metabolism; IMP biosynthesis via de novo pathway; 5-amino-1-(5-phospho-D-ribosyl)imidazole-4-carboxylate from 5-amino-1-(5-phospho-D-ribosyl)imidazole (carboxylase route): step 1/1. In terms of biological role, catalyzes the reversible conversion of 5-aminoimidazole ribonucleotide (AIR) and CO(2) to 4-carboxy-5-aminoimidazole ribonucleotide (CAIR). Does not accept N5-carboxyaminoimidazole ribonucleotide (N5-CAIR) as a substrate. In Treponema denticola (strain ATCC 35405 / DSM 14222 / CIP 103919 / JCM 8153 / KCTC 15104), this protein is Phosphoribosylaminoimidazole carboxylase.